The following is a 100-amino-acid chain: Urease subunit gamma (100 aa).

The protein belongs to the urease gamma subunit family. Heterotrimer of UreA (gamma), UreB (beta) and UreC (alpha) subunits. Three heterotrimers associate to form the active enzyme.

It localises to the cytoplasm. The catalysed reaction is urea + 2 H2O + H(+) = hydrogencarbonate + 2 NH4(+). It functions in the pathway nitrogen metabolism; urea degradation; CO(2) and NH(3) from urea (urease route): step 1/1. The polypeptide is Urease subunit gamma (Yersinia bercovieri).